A 272-amino-acid polypeptide reads, in one-letter code: Shikimate dehydrogenase (NADP(+)) (272 aa).

Shikimate is bound by residues Ser14–Ser16 and Thr61. Lys65 acts as the Proton acceptor in catalysis. Glu77 lines the NADP(+) pocket. Shikimate-binding residues include Asn86 and Asp102. Residues Gly126–Ala130, Asn149–Arg154, and Met213 each bind NADP(+). Shikimate is bound at residue Tyr215. Gly237 provides a ligand contact to NADP(+).

Belongs to the shikimate dehydrogenase family. Homodimer.

It catalyses the reaction shikimate + NADP(+) = 3-dehydroshikimate + NADPH + H(+). Its pathway is metabolic intermediate biosynthesis; chorismate biosynthesis; chorismate from D-erythrose 4-phosphate and phosphoenolpyruvate: step 4/7. Involved in the biosynthesis of the chorismate, which leads to the biosynthesis of aromatic amino acids. Catalyzes the reversible NADPH linked reduction of 3-dehydroshikimate (DHSA) to yield shikimate (SA). The protein is Shikimate dehydrogenase (NADP(+)) of Salmonella enteritidis PT4 (strain P125109).